A 30-amino-acid polypeptide reads, in one-letter code: Urease subunit alpha (30 aa).

The protein belongs to the metallo-dependent hydrolases superfamily. Urease alpha subunit family. In terms of assembly, heterotrimer of UreA (gamma), UreB (beta) and UreC (alpha) subunits. Three heterotrimers associate to form the active enzyme. It depends on Ni cation as a cofactor.

It is found in the cytoplasm. It carries out the reaction urea + 2 H2O + H(+) = hydrogencarbonate + 2 NH4(+). Its pathway is nitrogen metabolism; urea degradation; CO(2) and NH(3) from urea (urease route): step 1/1. This Escherichia coli protein is Urease subunit alpha (ureC).